A 451-amino-acid chain; its full sequence is uncharacterized protein (451 aa).

This sequence to ORF5 in pFZ1.

This is an uncharacterized protein from Methanothermobacter thermautotrophicus (Methanobacterium thermoformicicum).